We begin with the raw amino-acid sequence, 244 residues long: Protein HRI1 (244 aa).

Position 143 is a phosphoserine (S143).

Belongs to the HRI1 family. Interacts with HRR25. May interact with SEC72.

It is found in the cytoplasm. The protein localises to the nucleus. In terms of biological role, unknown. Non essential. In Saccharomyces cerevisiae (strain ATCC 204508 / S288c) (Baker's yeast), this protein is Protein HRI1 (HRI1).